Here is a 58-residue protein sequence, read N- to C-terminus: Small ribosomal subunit protein bS21 (58 aa).

Belongs to the bacterial ribosomal protein bS21 family.

The sequence is that of Small ribosomal subunit protein bS21 from Staphylococcus saprophyticus subsp. saprophyticus (strain ATCC 15305 / DSM 20229 / NCIMB 8711 / NCTC 7292 / S-41).